A 302-amino-acid chain; its full sequence is 4-hydroxy-tetrahydrodipicolinate synthase (302 aa).

T55 serves as a coordination point for pyruvate. Y144 functions as the Proton donor/acceptor in the catalytic mechanism. The active-site Schiff-base intermediate with substrate is the K172. V214 lines the pyruvate pocket.

It belongs to the DapA family. Homotetramer; dimer of dimers.

The protein localises to the cytoplasm. It carries out the reaction L-aspartate 4-semialdehyde + pyruvate = (2S,4S)-4-hydroxy-2,3,4,5-tetrahydrodipicolinate + H2O + H(+). It functions in the pathway amino-acid biosynthesis; L-lysine biosynthesis via DAP pathway; (S)-tetrahydrodipicolinate from L-aspartate: step 3/4. Functionally, catalyzes the condensation of (S)-aspartate-beta-semialdehyde [(S)-ASA] and pyruvate to 4-hydroxy-tetrahydrodipicolinate (HTPA). This chain is 4-hydroxy-tetrahydrodipicolinate synthase, found in Parasynechococcus marenigrum (strain WH8102).